Reading from the N-terminus, the 228-residue chain is MPGRTAPTRSEPVPDRAEARTRMVETQLVARGIRDAAVLDAMRAVPREAFVPDALAGEAYGDGPLPIGVGQTISQPYIVALMIEALALRPGDRVLEVGAGCGYAAAVLARMGVQVFAIERHAALGEAARARLAALGLTVSLRIGDGHAGWPEAAPFDAILVSAAGSTIPEALKAQLKPRGRLVIPVGPPGGQTLLRLTRRGRDRFESRDFGPVSFVPLLRGVGTADPV.

The active site involves Ser-74.

This sequence belongs to the methyltransferase superfamily. L-isoaspartyl/D-aspartyl protein methyltransferase family.

The protein localises to the cytoplasm. The enzyme catalyses [protein]-L-isoaspartate + S-adenosyl-L-methionine = [protein]-L-isoaspartate alpha-methyl ester + S-adenosyl-L-homocysteine. Functionally, catalyzes the methyl esterification of L-isoaspartyl residues in peptides and proteins that result from spontaneous decomposition of normal L-aspartyl and L-asparaginyl residues. It plays a role in the repair and/or degradation of damaged proteins. This chain is Protein-L-isoaspartate O-methyltransferase, found in Methylorubrum extorquens (strain PA1) (Methylobacterium extorquens).